The sequence spans 1088 residues: V-type proton ATPase catalytic subunit A (1088 aa).

Residue 257 to 264 participates in ATP binding; the sequence is GAFGCGKT. A DOD-type homing endonuclease domain is found at 485-662; sequence LLGTWAGIGN…LVKIAHSLGI (178 aa).

The protein belongs to the ATPase alpha/beta chains family. V-ATPase is a heteromultimeric enzyme composed of a peripheral catalytic V1 complex (components A to H) attached to an integral membrane V0 proton pore complex (components: a, c, c', c'', d, e, f and VOA1). This protein undergoes a protein self splicing that involves a post-translational excision of the VDE intervening region (intein) followed by peptide ligation.

Its subcellular location is the vacuole membrane. The enzyme catalyses ATP + H2O + 4 H(+)(in) = ADP + phosphate + 5 H(+)(out). In terms of biological role, catalytic subunit of the V1 complex of vacuolar(H+)-ATPase (V-ATPase), a multisubunit enzyme composed of a peripheral complex (V1) that hydrolyzes ATP and a membrane integral complex (V0) that translocates protons. V-ATPase is responsible for acidifying and maintaining the pH of intracellular compartments. Its function is as follows. VDE is an endonuclease that can cleave at a site present in a VMA1 allele that lacks the derived endonuclease segment of the open reading frame; cleavage at this site only occurs during meiosis and initiates 'homing', a genetic event that converts a VMA1 allele lacking VDE into one that contains it. This is V-type proton ATPase catalytic subunit A (VMA1) from Candida tropicalis (Yeast).